Here is a 171-residue protein sequence, read N- to C-terminus: Putative RING finger protein 027R (171 aa).

An RING-type zinc finger spans residues cysteine 121–arginine 163.

This sequence belongs to the IIV-6 157L family.

The protein is Putative RING finger protein 027R of Aedes vexans (Inland floodwater mosquito).